The chain runs to 296 residues: Aspartate and glycine-rich protein (296 aa).

Over residues 1–77 the composition is skewed to gly residues; it reads GDGENGNGNG…GNGNGNGNGN (77 aa). Disordered regions lie at residues 1-219 and 233-296; these read GDGE…DNGG and RARA…YTSY. Composition is skewed to acidic residues over residues 80-96 and 103-194; these read FDDD…DDWN and NGDD…DDRW. Gly residues predominate over residues 198 to 210; that stretch reads NGNGNGNGNGNGN. Positions 233 to 243 are enriched in low complexity; sequence RARAAASAAGR. The span at 244–259 shows a compositional bias: gly residues; that stretch reads SRGGSGGSGGSGGSGG. Positions 270 to 281 are enriched in low complexity; it reads RAFASARASSGN.

In terms of tissue distribution, component of the acid-soluble and acid-insoluble organic matrix of calcified shell layers (at protein level).

It is found in the secreted. This chain is Aspartate and glycine-rich protein, found in Haliotis asinina (Donkey's ear abalone).